The primary structure comprises 845 residues: Proto-oncogene vav (845 aa).

In terms of domain architecture, Calponin-homology (CH) spans M1 to P119. The region spanning K194–V373 is the DH domain. The 103-residue stretch at R402–S504 folds into the PH domain. The Phorbol-ester/DAG-type zinc-finger motif lies at G515–C564. The region spanning L592–H660 is the SH3 1 domain. Residues W671–Y765 enclose the SH2 domain. An SH3 2 domain is found at K782 to S842. A phosphotyrosine mark is found at Y826 and Y844.

As to quaternary structure, interacts with SHB. Interacts with APS, DOCK2, GRB2, GRB3, DOCK2, SLA, TEC and ZNF655/VIK. Interacts with SIAH2; without leading to its degradation. Associates with BLNK, PLCG1, GRB2 and NCK1 in a B-cell antigen receptor-dependent fashion. Interacts with CBLB; which inhibits tyrosine phosphorylation and down-regulates activity. May interact with CCPG1. Interacts with CLNK. Interacts with THEMIS2. Interacts with NEK3 and this interaction is prolactin-dependent. Interacts with ITK. Interacts with PTK2B/PYK2. Interacts with HCK. Interacts with PTK2B/PYK2. Interacts (via SH2 domain) with SYK. Interacts with ANKRD54. Interacts with CD6. Interacts with isoform 2 of CRACR2A. Interacts with LCP2; this interaction plays a role in TCR-mediated cytokine production. Phosphorylated by FYN. Phosphorylated on tyrosine residues by HCK in response to IFNG and bacterial lipopolysaccharide (LPS). Widely expressed in hematopoietic cells but not in other cell types. Found in the spleen and lung.

Functionally, couples tyrosine kinase signals with the activation of the Rho/Rac GTPases, thus leading to cell differentiation and/or proliferation. This is Proto-oncogene vav (Vav1) from Mus musculus (Mouse).